Reading from the N-terminus, the 444-residue chain is ATP-dependent protease ATPase subunit HslU (444 aa).

Residues isoleucine 20 and 62–67 (GVGKTE) each bind ATP. Positions 130 to 158 (EDRILDALVPPPRGASGEPERGEDNSARQ) are disordered. ATP is bound by residues aspartate 257, glutamate 322, and arginine 394.

It belongs to the ClpX chaperone family. HslU subfamily. As to quaternary structure, a double ring-shaped homohexamer of HslV is capped on each side by a ring-shaped HslU homohexamer. The assembly of the HslU/HslV complex is dependent on binding of ATP.

It is found in the cytoplasm. Functionally, ATPase subunit of a proteasome-like degradation complex; this subunit has chaperone activity. The binding of ATP and its subsequent hydrolysis by HslU are essential for unfolding of protein substrates subsequently hydrolyzed by HslV. HslU recognizes the N-terminal part of its protein substrates and unfolds these before they are guided to HslV for hydrolysis. The protein is ATP-dependent protease ATPase subunit HslU of Bordetella bronchiseptica (strain ATCC BAA-588 / NCTC 13252 / RB50) (Alcaligenes bronchisepticus).